The sequence spans 522 residues: Glucose-1-phosphate adenylyltransferase large subunit 1, chloroplastic (522 aa).

A chloroplast-targeting transit peptide spans 1 to 54 (MVVSADCRISLSAPSCIRSSSTGLTRHIKLGSFCNGELMGKKLNLSQLPNIRLR). At Ser428 the chain carries Phosphoserine.

The protein belongs to the bacterial/plant glucose-1-phosphate adenylyltransferase family. In terms of assembly, heterotetramer. As to expression, leaves.

The protein resides in the plastid. It is found in the chloroplast. The enzyme catalyses alpha-D-glucose 1-phosphate + ATP + H(+) = ADP-alpha-D-glucose + diphosphate. Its pathway is glycan biosynthesis; starch biosynthesis. With respect to regulation, activated by 3'phosphoglycerate, inhibited by orthophosphate. Allosteric regulation. This protein plays a role in synthesis of starch. It catalyzes the synthesis of the activated glycosyl donor, ADP-glucose from Glc-1-P and ATP. The protein is Glucose-1-phosphate adenylyltransferase large subunit 1, chloroplastic (ADG2) of Arabidopsis thaliana (Mouse-ear cress).